The chain runs to 433 residues: MKRVYSKIESIVGNVITVMAQNVKYGELAIVRSKDSSSLAEVIKLDRDKVSLQVYNGTIGISTADEVKFLGHPMQVTFSENLLGRIFDGAGNPKDGGPRLEDDLIEIGGPSANPAKRIVPRNMIRTGIPMIDVFNTLVESQKLPIFSVSGEPYNELLIRIALQAEVDLIILGGMGLKNDDYLTFKDYLEKGGALSRTIFFVNTANDPVVESLTVPDISLAVAEKFALQGKKVLVLLTDMTNFADAMKEIAITMEQVPSNRGYPGDLYSQLASRYEKAIDFEGAGSITILAVTTMPGDDITHPVPDNTGYITEGQYYLKGGRIEPFGSLSRLKQMVNGKTRDDHRTIMDAMIKLYASSKESIEKKAMGFNMTEWDEKLIKYSGMFESKLMDLSVNIPLEEALDLGWEILFSCFEPKETGIRTELVEKYWPQKKD.

The protein belongs to the ATPase alpha/beta chains family.

Its function is as follows. Produces ATP from ADP in the presence of a proton gradient across the membrane. The V-type beta chain is a regulatory subunit. The polypeptide is V-type ATP synthase beta chain (Borrelia turicatae (strain 91E135)).